The chain runs to 81 residues: Photosystem I iron-sulfur center (81 aa).

4Fe-4S ferredoxin-type domains are found at residues 2-31 (AHSVKVYDTCIGCTQCVRACPCDVLEMVPW) and 39-68 (IASAPRTEDCIGCKRCETACPTDFLSVRVY). 8 residues coordinate [4Fe-4S] cluster: Cys11, Cys14, Cys17, Cys21, Cys48, Cys51, Cys54, and Cys58.

In terms of assembly, the eukaryotic PSI reaction center is composed of at least 11 subunits. It depends on [4Fe-4S] cluster as a cofactor.

It is found in the plastid. Its subcellular location is the chloroplast thylakoid membrane. The catalysed reaction is reduced [plastocyanin] + hnu + oxidized [2Fe-2S]-[ferredoxin] = oxidized [plastocyanin] + reduced [2Fe-2S]-[ferredoxin]. In terms of biological role, apoprotein for the two 4Fe-4S centers FA and FB of photosystem I (PSI); essential for photochemical activity. FB is the terminal electron acceptor of PSI, donating electrons to ferredoxin. The C-terminus interacts with PsaA/B/D and helps assemble the protein into the PSI complex. Required for binding of PsaD and PsaE to PSI. PSI is a plastocyanin/cytochrome c6-ferredoxin oxidoreductase, converting photonic excitation into a charge separation, which transfers an electron from the donor P700 chlorophyll pair to the spectroscopically characterized acceptors A0, A1, FX, FA and FB in turn. In Gracilaria tenuistipitata var. liui (Red alga), this protein is Photosystem I iron-sulfur center.